Reading from the N-terminus, the 360-residue chain is Peptide chain release factor 1 (360 aa).

Position 235 is an N5-methylglutamine (Gln235).

This sequence belongs to the prokaryotic/mitochondrial release factor family. In terms of processing, methylated by PrmC. Methylation increases the termination efficiency of RF1.

Its subcellular location is the cytoplasm. In terms of biological role, peptide chain release factor 1 directs the termination of translation in response to the peptide chain termination codons UAG and UAA. This Paraburkholderia phymatum (strain DSM 17167 / CIP 108236 / LMG 21445 / STM815) (Burkholderia phymatum) protein is Peptide chain release factor 1.